A 340-amino-acid chain; its full sequence is tRNA dimethylallyltransferase (340 aa).

The interval 1-25 (MDQNRSPNGRDCREPPSPSSTARPG) is disordered. 31–38 (GPTATGKS) contacts ATP. 33–38 (TATGKS) lines the substrate pocket. The segment at 56-59 (DSRQ) is interaction with substrate tRNA.

This sequence belongs to the IPP transferase family. In terms of assembly, monomer. Mg(2+) is required as a cofactor.

It carries out the reaction adenosine(37) in tRNA + dimethylallyl diphosphate = N(6)-dimethylallyladenosine(37) in tRNA + diphosphate. Its function is as follows. Catalyzes the transfer of a dimethylallyl group onto the adenine at position 37 in tRNAs that read codons beginning with uridine, leading to the formation of N6-(dimethylallyl)adenosine (i(6)A). This is tRNA dimethylallyltransferase from Synechococcus sp. (strain JA-3-3Ab) (Cyanobacteria bacterium Yellowstone A-Prime).